The following is an 89-amino-acid chain: Small ribosomal subunit protein bS16 (89 aa).

Belongs to the bacterial ribosomal protein bS16 family.

In Desulforamulus reducens (strain ATCC BAA-1160 / DSM 100696 / MI-1) (Desulfotomaculum reducens), this protein is Small ribosomal subunit protein bS16.